Here is a 325-residue protein sequence, read N- to C-terminus: Delta(1)-pyrroline-2-carboxylate reductase (325 aa).

Belongs to the ornithine cyclodeaminase/mu-crystallin family.

It catalyses the reaction L-proline + NAD(+) = 1-pyrroline-2-carboxylate + NADH + H(+). The catalysed reaction is L-proline + NADP(+) = 1-pyrroline-2-carboxylate + NADPH + H(+). Its function is as follows. Catalyzes the reduction of Delta(1)-pyrroline-2-carboxylate (Pyr2C) to L-proline, using preferentially NADPH over NADH as the electron donor. Is likely involved in a degradation pathway that converts trans-3-hydroxy-L-proline (t3LHyp) to L-proline. This Bacillus thuringiensis subsp. konkukian (strain 97-27) protein is Delta(1)-pyrroline-2-carboxylate reductase.